The following is a 1030-amino-acid chain: Beta-galactosidase (1030 aa).

Residues Asn-99 and Asp-197 each contribute to the substrate site. Position 197 (Asp-197) interacts with Na(+). Glu-411, His-413, and Glu-456 together coordinate Mg(2+). Residues Glu-456 and 532-535 each bind substrate; that span reads EYAH. Glu-456 (proton donor) is an active-site residue. The Nucleophile role is filled by Glu-532. Residue Asn-592 coordinates Mg(2+). Na(+) contacts are provided by Phe-596 and Asn-599. Substrate contacts are provided by Asn-599 and Trp-1004.

This sequence belongs to the glycosyl hydrolase 2 family. Homotetramer. Requires Mg(2+) as cofactor. Na(+) serves as cofactor.

The catalysed reaction is Hydrolysis of terminal non-reducing beta-D-galactose residues in beta-D-galactosides.. This Photobacterium profundum (strain SS9) protein is Beta-galactosidase.